The primary structure comprises 338 residues: Phenylalanine--tRNA ligase alpha subunit (338 aa).

Position 253 (Glu-253) interacts with Mg(2+).

Belongs to the class-II aminoacyl-tRNA synthetase family. Phe-tRNA synthetase alpha subunit type 1 subfamily. As to quaternary structure, tetramer of two alpha and two beta subunits. Mg(2+) serves as cofactor.

The protein localises to the cytoplasm. The catalysed reaction is tRNA(Phe) + L-phenylalanine + ATP = L-phenylalanyl-tRNA(Phe) + AMP + diphosphate + H(+). This Geobacter metallireducens (strain ATCC 53774 / DSM 7210 / GS-15) protein is Phenylalanine--tRNA ligase alpha subunit.